Consider the following 421-residue polypeptide: Histidine--tRNA ligase (421 aa).

Belongs to the class-II aminoacyl-tRNA synthetase family. In terms of assembly, homodimer.

It is found in the cytoplasm. The catalysed reaction is tRNA(His) + L-histidine + ATP = L-histidyl-tRNA(His) + AMP + diphosphate + H(+). The sequence is that of Histidine--tRNA ligase from Francisella tularensis subsp. novicida (strain U112).